Consider the following 112-residue polypeptide: 2Fe-2S ferredoxin (112 aa).

In terms of domain architecture, 2Fe-2S ferredoxin-type spans 5 to 107 (IKVTFIVNDG…GIKVRLPSAT (103 aa)). [2Fe-2S] cluster-binding residues include Cys-42, Cys-48, Cys-51, and Cys-88.

The protein belongs to the adrenodoxin/putidaredoxin family. The cofactor is [2Fe-2S] cluster.

Its function is as follows. Ferredoxin are iron-sulfur proteins that transfer electrons in a wide variety of metabolic reactions. The polypeptide is 2Fe-2S ferredoxin (fdxB) (Rickettsia felis (strain ATCC VR-1525 / URRWXCal2) (Rickettsia azadi)).